The sequence spans 467 residues: ATP-dependent protease ATPase subunit HslU (467 aa).

ATP-binding positions include Val22 and 64 to 69 (GVGKTE). The disordered stretch occupies residues 149–192 (QTNNPLESLFGGAIPNFGQNNEDEEEPPTEEIKTKRSEIKRQLE). Over residues 178–192 (EEIKTKRSEIKRQLE) the composition is skewed to basic and acidic residues. Positions 280, 345, and 417 each coordinate ATP.

It belongs to the ClpX chaperone family. HslU subfamily. As to quaternary structure, a double ring-shaped homohexamer of HslV is capped on each side by a ring-shaped HslU homohexamer. The assembly of the HslU/HslV complex is dependent on binding of ATP.

The protein resides in the cytoplasm. Functionally, ATPase subunit of a proteasome-like degradation complex; this subunit has chaperone activity. The binding of ATP and its subsequent hydrolysis by HslU are essential for unfolding of protein substrates subsequently hydrolyzed by HslV. HslU recognizes the N-terminal part of its protein substrates and unfolds these before they are guided to HslV for hydrolysis. This Staphylococcus aureus (strain bovine RF122 / ET3-1) protein is ATP-dependent protease ATPase subunit HslU.